Consider the following 350-residue polypeptide: Holliday junction branch migration complex subunit RuvB (350 aa).

Residues 1–186 are large ATPase domain (RuvB-L); it reads MAGHEEEDER…FGIPLRLDFY (186 aa). ATP-binding positions include leucine 25, arginine 26, glycine 67, lysine 70, threonine 71, threonine 72, 133-135, arginine 176, tyrosine 186, and arginine 223; that span reads EDF. Threonine 71 contacts Mg(2+). The segment at 187 to 257 is small ATPAse domain (RuvB-S); the sequence is ETDELVQIVT…IADAALNRLE (71 aa). The tract at residues 260–350 is head domain (RuvB-H); that stretch reads GRGLDAMDRR…VQPDLWSDAP (91 aa). 3 residues coordinate DNA: arginine 296, arginine 315, and arginine 320.

This sequence belongs to the RuvB family. As to quaternary structure, homohexamer. Forms an RuvA(8)-RuvB(12)-Holliday junction (HJ) complex. HJ DNA is sandwiched between 2 RuvA tetramers; dsDNA enters through RuvA and exits via RuvB. An RuvB hexamer assembles on each DNA strand where it exits the tetramer. Each RuvB hexamer is contacted by two RuvA subunits (via domain III) on 2 adjacent RuvB subunits; this complex drives branch migration. In the full resolvosome a probable DNA-RuvA(4)-RuvB(12)-RuvC(2) complex forms which resolves the HJ.

The protein resides in the cytoplasm. The enzyme catalyses ATP + H2O = ADP + phosphate + H(+). Its function is as follows. The RuvA-RuvB-RuvC complex processes Holliday junction (HJ) DNA during genetic recombination and DNA repair, while the RuvA-RuvB complex plays an important role in the rescue of blocked DNA replication forks via replication fork reversal (RFR). RuvA specifically binds to HJ cruciform DNA, conferring on it an open structure. The RuvB hexamer acts as an ATP-dependent pump, pulling dsDNA into and through the RuvAB complex. RuvB forms 2 homohexamers on either side of HJ DNA bound by 1 or 2 RuvA tetramers; 4 subunits per hexamer contact DNA at a time. Coordinated motions by a converter formed by DNA-disengaged RuvB subunits stimulates ATP hydrolysis and nucleotide exchange. Immobilization of the converter enables RuvB to convert the ATP-contained energy into a lever motion, pulling 2 nucleotides of DNA out of the RuvA tetramer per ATP hydrolyzed, thus driving DNA branch migration. The RuvB motors rotate together with the DNA substrate, which together with the progressing nucleotide cycle form the mechanistic basis for DNA recombination by continuous HJ branch migration. Branch migration allows RuvC to scan DNA until it finds its consensus sequence, where it cleaves and resolves cruciform DNA. The sequence is that of Holliday junction branch migration complex subunit RuvB from Rhodospirillum rubrum (strain ATCC 11170 / ATH 1.1.1 / DSM 467 / LMG 4362 / NCIMB 8255 / S1).